Here is a 1325-residue protein sequence, read N- to C-terminus: Nucleoporin nup146 (1325 aa).

Disordered regions lie at residues 1-20, 453-474, 758-951, and 973-994; these read MNAE…AGGS, VRAS…FVKN, GEGL…PKIH, and FPKQ…QESL. Residues 763 to 778 are compositionally biased toward polar residues; that stretch reads QQKTSKALPSTGITKL. Over residues 779 to 791 the composition is skewed to basic and acidic residues; the sequence is SENDNEKAEESNE. Residues 792 to 801 show a composition bias toward polar residues; that stretch reads TKGFNTTIAK. The span at 802 to 811 shows a compositional bias: basic and acidic residues; that stretch reads QNDKSSKSEG. 2 stretches are compositionally biased toward polar residues: residues 816–835 and 850–861; these read ANMS…SKPS and FTFNKPSETPPF. Residues 867-881 show a composition bias toward basic and acidic residues; it reads LVEKESKQDVSDTSD. Position 899 is a phosphothreonine (T899). The span at 927 to 937 shows a compositional bias: acidic residues; sequence SEIEDQDEESS. The residue at position 946 (T946) is a Phosphothreonine. 3 positions are modified to phosphoserine: S1041, S1043, and S1044.

Its subcellular location is the cytoplasm. It is found in the nucleus. Functionally, functions as a component of the nuclear pore complex (NPC). NPC components, collectively referred to as nucleoporins (NUPs), can play the role of both NPC structural components and of docking or interaction partners for transiently associated nuclear transport factors. Active directional transport is assured by both, a Phe-Gly (FG) repeat affinity gradient for these transport factors across the NPC and a transport cofactor concentration gradient across the nuclear envelope. The sequence is that of Nucleoporin nup146 (nup146) from Schizosaccharomyces pombe (strain 972 / ATCC 24843) (Fission yeast).